Here is a 117-residue protein sequence, read N- to C-terminus: MSNQELLQLAVNAVDDKKAEQVVALNMKGISLIADFFLICHGNSEKQVQAIAHELKKVAQEQGIEIKRLEGYEQARWVLIDLGDVVVHVFHKDERAYYNLEKLWGDAPTVELEGVIS.

This sequence belongs to the Iojap/RsfS family. In terms of assembly, interacts with ribosomal protein uL14 (rplN).

It localises to the cytoplasm. In terms of biological role, functions as a ribosomal silencing factor. Interacts with ribosomal protein uL14 (rplN), blocking formation of intersubunit bridge B8. Prevents association of the 30S and 50S ribosomal subunits and the formation of functional ribosomes, thus repressing translation. The polypeptide is Ribosomal silencing factor RsfS (Halalkalibacterium halodurans (strain ATCC BAA-125 / DSM 18197 / FERM 7344 / JCM 9153 / C-125) (Bacillus halodurans)).